The sequence spans 345 residues: Platelet-derived growth factor C (345 aa).

A signal peptide spans 1 to 22 (MLLLGLLLLTSALAGQRTGTRA). Residues 24–33 (SNLSSKLQLS) are compositionally biased toward polar residues. The interval 24-45 (SNLSSKLQLSSDKEQNGVQDPR) is disordered. Asn25 is a glycosylation site (N-linked (GlcNAc...) asparagine). Residues 34 to 45 (SDKEQNGVQDPR) show a composition bias toward basic and acidic residues. The region spanning 46-163 (HERVVTISGN…PGFCIHYSII (118 aa)) is the CUB domain. The N-linked (GlcNAc...) asparagine glycan is linked to Asn55. Disulfide bonds link Cys104-Cys124, Cys250-Cys294, Cys280-Cys335, and Cys287-Cys337.

The protein belongs to the PDGF/VEGF growth factor family. As to quaternary structure, homodimer; disulfide-linked. Interacts with PDGFRA homodimers, and with heterodimers formed by PDGFRA and PDGFRB. Interacts (via CUB domain) with PLAT (via kringle domain). Proteolytic removal of the N-terminal CUB domain releasing the core domain is necessary for unmasking the receptor-binding epitopes of the core domain. Cleavage after basic residues in the hinge region (region connecting the CUB and growth factor domains) gives rise to the receptor-binding form. Cleaved by PLAT and PLG. In terms of processing, sumoylated with SUMO1. Post-translationally, N-glycosylated. In terms of tissue distribution, highly expressed in the kidney and adrenal gland. In the kidney, it is expressed in arteriolar smooth muscle cells and in epithelial cells of individual segments (at protein level).

Its subcellular location is the cytoplasm. It is found in the cytosol. It localises to the secreted. The protein resides in the nucleus. The protein localises to the cytoplasmic granule. Its subcellular location is the cell membrane. Its function is as follows. Growth factor that plays an essential role in the regulation of embryonic development, cell proliferation, cell migration, survival and chemotaxis. Potent mitogen and chemoattractant for cells of mesenchymal origin. Required for normal skeleton formation during embryonic development, especially for normal development of the craniofacial skeleton and for normal development of the palate. Required for normal skin morphogenesis during embryonic development. Plays an important role in wound healing, where it appears to be involved in three stages: inflammation, proliferation and remodeling. Plays an important role in angiogenesis and blood vessel development. Involved in fibrotic processes, in which transformation of interstitial fibroblasts into myofibroblasts plus collagen deposition occurs. The CUB domain has mitogenic activity in coronary artery smooth muscle cells, suggesting a role beyond the maintenance of the latency of the PDGF domain. In the nucleus, PDGFC seems to have additional function. In Rattus norvegicus (Rat), this protein is Platelet-derived growth factor C (Pdgfc).